Consider the following 834-residue polypeptide: Dual specificity calcium/calmodulin-dependent 3',5'-cyclic nucleotide phosphodiesterase 1 (834 aa).

A disordered region spans residues 152-338 (HSHGRDDQQQ…DELSEVQPDA (187 aa)). Over residues 207–222 (THSGPTGPPSNTSSET) the composition is skewed to low complexity. Residues 236-252 (TVRESVMEESPSKDPGD) are compositionally biased toward basic and acidic residues. Over residues 260-301 (STSTLTSQTTTSSSATAEPSAKAAESQAGSAGSSGSCSNPAA) the composition is skewed to low complexity. The segment covering 313-322 (WARSMSTNKT) has biased composition (polar residues). Positions 364–387 (EKPKFRSVAHAIRAGIFVDRMYRR) are calmodulin-binding. The 395-residue stretch at 392-786 (ALTAFPPDVV…RIWKEQAVKD (395 aa)) folds into the PDEase domain. The Proton donor role is filled by histidine 469. Residues histidine 473, histidine 509, aspartate 510, and aspartate 617 each contribute to the Zn(2+) site. Aspartate 510 is a binding site for Mg(2+). 2 disordered regions span residues 720 to 744 (IVIPNSGITPSMDKPRDHRTEAKTT) and 797 to 834 (EEAAAAAAAEAEESKPETETADGEQSEPAAEPADGAAA). A compositionally biased stretch (basic and acidic residues) spans 732–741 (DKPRDHRTEA). The segment covering 823–834 (EPAAEPADGAAA) has biased composition (low complexity).

Belongs to the cyclic nucleotide phosphodiesterase family. PDE1 subfamily. Zn(2+) is required as a cofactor. Mg(2+) serves as cofactor. Expressed in the head (at protein level). Expressed in Malpighian tubules. Expressed in neurons in the brain and ventral ganglia with male flies having higher levels of expression in the abdominal ganglia compared to female flies.

The enzyme catalyses a nucleoside 3',5'-cyclic phosphate + H2O = a nucleoside 5'-phosphate + H(+). The catalysed reaction is 3',5'-cyclic GMP + H2O = GMP + H(+). It carries out the reaction 3',5'-cyclic AMP + H2O = AMP + H(+). Its activity is regulated as follows. Type I PDE are activated by the binding of calmodulin in the presence of Ca(2+). Inhibited by zaprinast and sildenafil. Cyclic nucleotide phosphodiesterase with a dual specificity for the second messengers cAMP and cGMP, which are key regulators of many important physiological processes. Required for male fertility and male mating behavior. This Drosophila melanogaster (Fruit fly) protein is Dual specificity calcium/calmodulin-dependent 3',5'-cyclic nucleotide phosphodiesterase 1.